We begin with the raw amino-acid sequence, 145 residues long: Transcriptional regulator SlyA (145 aa).

Residues 2–135 (ELPLGSDLAR…LALLVARLEK (134 aa)) form the HTH marR-type domain. A DNA-binding region (H-T-H motif) is located at residues 49-72 (QIQLAKAIGIEQPSLVRTLDQLEE).

The protein belongs to the SlyA family. In terms of assembly, homodimer.

Functionally, transcription regulator that can specifically activate or repress expression of target genes. The protein is Transcriptional regulator SlyA of Pectobacterium atrosepticum (strain SCRI 1043 / ATCC BAA-672) (Erwinia carotovora subsp. atroseptica).